The following is a 102-amino-acid chain: MKFSKLSLTLALILTQALLVVCGKINEDFMENGLESHALHDEIRKPIDTEKADAERGVLDCVVNTLGCSSDKDCCGMTPSCTLGICAPSVGGIVGGLLGRAL.

The signal sequence occupies residues 1 to 23 (MKFSKLSLTLALILTQALLVVCG). Residues 24-56 (KINEDFMENGLESHALHDEIRKPIDTEKADAER) constitute a propeptide that is removed on maturation. 3 cysteine pairs are disulfide-bonded: Cys-61–Cys-75, Cys-68–Cys-81, and Cys-74–Cys-86. The residue at position 98 (Leu-98) is a Leucine amide. Residues 100 to 102 (RAL) constitute a propeptide that is removed on maturation.

This sequence belongs to the neurotoxin 15 family. 02 (omega-actx) subfamily. As to expression, expressed by the venom gland.

The protein resides in the secreted. In terms of biological role, potent inhibitor of insect, but not mammalian, voltage-gated calcium channels (Cav). This chain is Omega-hexatoxin-Hi2a, found in Hadronyche infensa (Fraser island funnel-web spider).